Reading from the N-terminus, the 185-residue chain is Elongation factor P 1 (185 aa).

This sequence belongs to the elongation factor P family.

It is found in the cytoplasm. The protein operates within protein biosynthesis; polypeptide chain elongation. Involved in peptide bond synthesis. Stimulates efficient translation and peptide-bond synthesis on native or reconstituted 70S ribosomes in vitro. Probably functions indirectly by altering the affinity of the ribosome for aminoacyl-tRNA, thus increasing their reactivity as acceptors for peptidyl transferase. This is Elongation factor P 1 (efp1) from Chlamydia pneumoniae (Chlamydophila pneumoniae).